The sequence spans 166 residues: Small ribosomal subunit protein uS5 (166 aa).

Residues 11–74 (LQEKLIAVNR…EKARRNMINV (64 aa)) form the S5 DRBM domain.

It belongs to the universal ribosomal protein uS5 family. Part of the 30S ribosomal subunit. Contacts proteins S4 and S8.

Functionally, with S4 and S12 plays an important role in translational accuracy. Its function is as follows. Located at the back of the 30S subunit body where it stabilizes the conformation of the head with respect to the body. The chain is Small ribosomal subunit protein uS5 from Mannheimia succiniciproducens (strain KCTC 0769BP / MBEL55E).